A 133-amino-acid chain; its full sequence is Small ribosomal subunit protein uS8 (133 aa).

Belongs to the universal ribosomal protein uS8 family. As to quaternary structure, part of the 30S ribosomal subunit. Contacts proteins S5 and S12.

Functionally, one of the primary rRNA binding proteins, it binds directly to 16S rRNA central domain where it helps coordinate assembly of the platform of the 30S subunit. This Synechocystis sp. (strain ATCC 27184 / PCC 6803 / Kazusa) protein is Small ribosomal subunit protein uS8.